We begin with the raw amino-acid sequence, 370 residues long: GTPase Obg (370 aa).

One can recognise an Obg domain in the interval 1–159 (MKFIDEARIE…RMLKLELKVL (159 aa)). Residues 128–147 (LHFKSSTNRAPRQKTDGKPG) form a disordered region. The OBG-type G domain maps to 160–334 (ADVGLLGMPN…LCYAIYDYLS (175 aa)). Residues 166–173 (GMPNAGKS), 191–195 (FTTLA), 213–216 (DIPG), 284–287 (NKLD), and 315–317 (SAL) contribute to the GTP site. 2 residues coordinate Mg(2+): Ser173 and Thr193.

Belongs to the TRAFAC class OBG-HflX-like GTPase superfamily. OBG GTPase family. As to quaternary structure, monomer. Mg(2+) serves as cofactor.

Its subcellular location is the cytoplasm. In terms of biological role, an essential GTPase which binds GTP, GDP and possibly (p)ppGpp with moderate affinity, with high nucleotide exchange rates and a fairly low GTP hydrolysis rate. Plays a role in control of the cell cycle, stress response, ribosome biogenesis and in those bacteria that undergo differentiation, in morphogenesis control. The polypeptide is GTPase Obg (Burkholderia cenocepacia (strain ATCC BAA-245 / DSM 16553 / LMG 16656 / NCTC 13227 / J2315 / CF5610) (Burkholderia cepacia (strain J2315))).